A 146-amino-acid polypeptide reads, in one-letter code: Hemoglobin subunit beta (146 aa).

The region spanning 2-146 (FLTAEEKSLV…VANALAHKYH (145 aa)) is the Globin domain. Ser-44 is modified (phosphoserine). Residue Lys-59 is modified to N6-acetyllysine. Position 63 (His-63) interacts with heme b. Lys-82 is subject to N6-acetyllysine. Residue His-92 participates in heme b binding. Cys-93 bears the S-nitrosocysteine mark. The residue at position 144 (Lys-144) is an N6-acetyllysine.

This sequence belongs to the globin family. Heterotetramer of two alpha chains and two beta chains. In terms of tissue distribution, red blood cells.

Functionally, involved in oxygen transport from the lung to the various peripheral tissues. In Proteles cristata (Aardwolf), this protein is Hemoglobin subunit beta (HBB).